Consider the following 382-residue polypeptide: Carboxynorspermidine/carboxyspermidine decarboxylase (382 aa).

An N6-(pyridoxal phosphate)lysine modification is found at lysine 41. Substrate is bound by residues glutamate 236 and aspartate 272.

It belongs to the Orn/Lys/Arg decarboxylase class-II family. NspC subfamily. As to quaternary structure, homodimer. Pyridoxal 5'-phosphate is required as a cofactor.

The protein localises to the cytoplasm. It catalyses the reaction carboxynorspermidine + H(+) = norspermidine + CO2. The enzyme catalyses carboxyspermidine + H(+) = spermidine + CO2. Its function is as follows. Catalyzes the decarboxylation of carboxynorspermidine and carboxyspermidine in vitro. In vivo, responsible for synthesizing spermidine, but not sym-norspermidine. In Campylobacter jejuni subsp. jejuni serotype O:6 (strain 81116 / NCTC 11828), this protein is Carboxynorspermidine/carboxyspermidine decarboxylase.